The chain runs to 486 residues: Matrilin-3 (486 aa).

The signal sequence occupies residues 1-28 (MPRPAPARRLPGLLLLLWPLLLLPSAAP). Residues 32–75 (ARPGFRRLETRGPGGSPGRRPSPAAPDGAPASGTSEPGRARGAG) are disordered. The span at 49 to 64 (GRRPSPAAPDGAPASG) shows a compositional bias: low complexity. Positions 83 to 258 (DLVFIIDSSR…GVIEKLSSRF (176 aa)) constitute a VWFA domain. R198 is modified (omega-N-methylarginine). EGF-like domains lie at 264–305 (ALDP…KTCS), 306–347 (ALDR…KTCS), 348–389 (AQDK…KTCS), and 390–431 (VRDK…KTCS). Disulfide bonds link C268–C279, C275–C289, C291–C304, C310–C321, C317–C331, C333–C346, C352–C363, C359–C373, C375–C388, C394–C405, C401–C415, and C417–C430. At S441 the chain carries Phosphoserine; by FAM20C. Phosphothreonine; by FAM20C is present on T442. A coiled-coil region spans residues 456–480 (DKVSSYLQRLNTKLDDILEKLKINE).

In terms of assembly, can form homooligomers (monomers, dimers, trimers and tetramers) and heterooligomers with matrilin-1. Interacts with COMP. Component of a complex containing at least CRELD2, MANF, MATN3 and PDIA4. Expressed only in cartilaginous tissues, such as vertebrae, ribs and shoulders.

It is found in the secreted. In terms of biological role, major component of the extracellular matrix of cartilage and may play a role in the formation of extracellular filamentous networks. The protein is Matrilin-3 (MATN3) of Homo sapiens (Human).